The primary structure comprises 284 residues: Bifunctional protein FolD (284 aa).

NADP(+) contacts are provided by residues 163–165 (GAS), I188, and I229.

It belongs to the tetrahydrofolate dehydrogenase/cyclohydrolase family. Homodimer.

It catalyses the reaction (6R)-5,10-methylene-5,6,7,8-tetrahydrofolate + NADP(+) = (6R)-5,10-methenyltetrahydrofolate + NADPH. The catalysed reaction is (6R)-5,10-methenyltetrahydrofolate + H2O = (6R)-10-formyltetrahydrofolate + H(+). It functions in the pathway one-carbon metabolism; tetrahydrofolate interconversion. Functionally, catalyzes the oxidation of 5,10-methylenetetrahydrofolate to 5,10-methenyltetrahydrofolate and then the hydrolysis of 5,10-methenyltetrahydrofolate to 10-formyltetrahydrofolate. The chain is Bifunctional protein FolD from Nautilia profundicola (strain ATCC BAA-1463 / DSM 18972 / AmH).